We begin with the raw amino-acid sequence, 376 residues long: MRSPHRDAIRTARGLVVKVGTTALTTPSGMFDAGRLAGLAEAVERRMKAGSDVVIVSSGAIAAGIEPLGLSRRPKDLATKQAAASVGQVALVNSWSAAFARYGRTVGQVLLTAHDISMRVQHTNAQRTLDRLRALHAVAIVNENDTVATNEIRFGDNDRLSALVAHLVGADALVLLSDIDGLYDCDPRKTADATFIPEVSGPADLDGVVAGRSSHLGTGGMASKVAAALLAADAGVPVLLAPAADAATALADASVGTVFAARPARLSARRFWVRYAAEATGALTLDAGAVRAVVRQRRSLLAAGITAVSGRFCGGDVVELRAPDAAMVARGVVAYDASELATMVGRSTSELPGELRRPVVHADDLVAVSAKQAKQV.

Residue Lys-18 participates in ATP binding. Residues Ser-58, Asp-145, and Asn-157 each coordinate substrate. ATP is bound by residues 177 to 178 (SD) and 218 to 224 (TGGMASK). The region spanning 280–358 (TGALTLDAGA…SELPGELRRP (79 aa)) is the PUA domain.

This sequence belongs to the glutamate 5-kinase family.

The protein localises to the cytoplasm. It carries out the reaction L-glutamate + ATP = L-glutamyl 5-phosphate + ADP. The protein operates within amino-acid biosynthesis; L-proline biosynthesis; L-glutamate 5-semialdehyde from L-glutamate: step 1/2. Catalyzes the transfer of a phosphate group to glutamate to form L-glutamate 5-phosphate. The polypeptide is Glutamate 5-kinase (Mycobacterium tuberculosis (strain ATCC 25177 / H37Ra)).